Reading from the N-terminus, the 227-residue chain is RNA pyrophosphohydrolase (227 aa).

Residues 6 to 149 form the Nudix hydrolase domain; sequence GFRPNVGIIL…KRDVYQMALT (144 aa). A Nudix box motif is present at residues 38–59; that stretch reads GGIKYGETPEQAMYRELHEEIG. Positions 165-227 are disordered; it reads PYGTHGAHGA…PVSTTRSTDD (63 aa). Residues 192–201 show a composition bias toward low complexity; that stretch reads AQAAQQADAD. The segment covering 217 to 227 has biased composition (polar residues); the sequence is TPVSTTRSTDD.

Belongs to the Nudix hydrolase family. RppH subfamily. Requires a divalent metal cation as cofactor.

Its function is as follows. Accelerates the degradation of transcripts by removing pyrophosphate from the 5'-end of triphosphorylated RNA, leading to a more labile monophosphorylated state that can stimulate subsequent ribonuclease cleavage. In Cupriavidus taiwanensis (strain DSM 17343 / BCRC 17206 / CCUG 44338 / CIP 107171 / LMG 19424 / R1) (Ralstonia taiwanensis (strain LMG 19424)), this protein is RNA pyrophosphohydrolase.